We begin with the raw amino-acid sequence, 164 residues long: Crossover junction endodeoxyribonuclease RuvC (164 aa).

Active-site residues include aspartate 7, glutamate 67, and aspartate 140. Aspartate 7, glutamate 67, and aspartate 140 together coordinate Mg(2+).

This sequence belongs to the RuvC family. Homodimer which binds Holliday junction (HJ) DNA. The HJ becomes 2-fold symmetrical on binding to RuvC with unstacked arms; it has a different conformation from HJ DNA in complex with RuvA. In the full resolvosome a probable DNA-RuvA(4)-RuvB(12)-RuvC(2) complex forms which resolves the HJ. Mg(2+) serves as cofactor.

Its subcellular location is the cytoplasm. The catalysed reaction is Endonucleolytic cleavage at a junction such as a reciprocal single-stranded crossover between two homologous DNA duplexes (Holliday junction).. In terms of biological role, the RuvA-RuvB-RuvC complex processes Holliday junction (HJ) DNA during genetic recombination and DNA repair. Endonuclease that resolves HJ intermediates. Cleaves cruciform DNA by making single-stranded nicks across the HJ at symmetrical positions within the homologous arms, yielding a 5'-phosphate and a 3'-hydroxyl group; requires a central core of homology in the junction. The consensus cleavage sequence is 5'-(A/T)TT(C/G)-3'. Cleavage occurs on the 3'-side of the TT dinucleotide at the point of strand exchange. HJ branch migration catalyzed by RuvA-RuvB allows RuvC to scan DNA until it finds its consensus sequence, where it cleaves and resolves the cruciform DNA. This chain is Crossover junction endodeoxyribonuclease RuvC, found in Alkaliphilus metalliredigens (strain QYMF).